The primary structure comprises 124 residues: Large ribosomal subunit protein bL17 (124 aa).

This sequence belongs to the bacterial ribosomal protein bL17 family. Part of the 50S ribosomal subunit. Contacts protein L32.

This Persephonella marina (strain DSM 14350 / EX-H1) protein is Large ribosomal subunit protein bL17.